A 71-amino-acid polypeptide reads, in one-letter code: Small ribosomal subunit protein bS21 (71 aa).

It belongs to the bacterial ribosomal protein bS21 family.

This Baumannia cicadellinicola subsp. Homalodisca coagulata protein is Small ribosomal subunit protein bS21.